The chain runs to 140 residues: Putative nickel-responsive regulator 3 (140 aa).

The Ni(2+) site is built by His-81, His-92, His-94, and Cys-100.

It belongs to the transcriptional regulatory CopG/NikR family. The cofactor is Ni(2+).

Transcriptional regulator. The chain is Putative nickel-responsive regulator 3 from Methanosarcina acetivorans (strain ATCC 35395 / DSM 2834 / JCM 12185 / C2A).